We begin with the raw amino-acid sequence, 540 residues long: Threonine--tRNA ligase catalytic subunit (540 aa).

The interval 134 to 428 is catalytic; it reads DHRIIGERLD…LLEHFRGKLP (295 aa). The Zn(2+) site is built by C226, H277, and H405.

It belongs to the class-II aminoacyl-tRNA synthetase family. Homodimer. Probably interacts with its editing subunit. Zn(2+) serves as cofactor.

It is found in the cytoplasm. The catalysed reaction is tRNA(Thr) + L-threonine + ATP = L-threonyl-tRNA(Thr) + AMP + diphosphate + H(+). In terms of biological role, catalyzes the attachment of threonine to tRNA(Thr) in a two-step reaction: L-threonine is first activated by ATP to form Thr-AMP and then transferred to the acceptor end of tRNA(Thr). Also activates L-serine and transfers it to tRNA(Thr) but cannot deacylate incorrectly charged amino acid; unlike most archaea the editing function is found in a freestanding protein. The sequence is that of Threonine--tRNA ligase catalytic subunit from Sulfurisphaera tokodaii (strain DSM 16993 / JCM 10545 / NBRC 100140 / 7) (Sulfolobus tokodaii).